Here is a 441-residue protein sequence, read N- to C-terminus: Phenoloxidase-activating enzyme (441 aa).

Positions Met-1 to Ala-21 are cleaved as a signal peptide. A Pyrrolidone carboxylic acid modification is found at Gln-22. 2 Clip domains span residues Ser-23–Cys-76 and Pro-77–Cys-127. Intrachain disulfides connect Cys-24–Cys-75, Cys-34–Cys-65, Cys-40–Cys-76, Cys-78–Cys-126, Cys-88–Cys-117, Cys-94–Cys-127, Cys-164–Cys-305, and Cys-203–Cys-219. The Peptidase S1 domain maps to Ile-174–Glu-440. His-218 (charge relay system) is an active-site residue. Positions 237, 239, 242, and 246 each coordinate Ca(2+). A glycan (N-linked (GlcNAc...) asparagine) is linked at Asn-239. Asp-285 functions as the Charge relay system in the catalytic mechanism. N-linked (GlcNAc...) asparagine glycosylation is present at Asn-334. 2 disulfide bridges follow: Cys-356-Cys-377 and Cys-387-Cys-416. Ser-391 (charge relay system) is an active-site residue.

Belongs to the peptidase S1 family. CLIP subfamily. In the active form, heterodimer of a light chain and a heavy chain; disulfide-linked. Post-translationally, proteolytically cleaved for activation. Cleavage produces a light chain and a catalytic heavy chain which remains covalently associated probably through an interchain disulfide bond. Glycosylated.

Its activity is regulated as follows. Stabilized by calcium. Inhibited by di-isopropyl phosphorofluoridate (DFP), phenylmethanesulfonylfluoride (PMSF), p-nitrophenyl-p'-guanidinobenzonate (p-NPGB), p-chloromercuribenzoate (PCMB), ethylenediaminetetraacetic acid (EDTA), urea and CI-13c. In terms of biological role, endopeptidase with selective post-Arg cleavage site. Activates prophenoloxidase. Has a probable role in the melanization process as part of the innate immune response. The polypeptide is Phenoloxidase-activating enzyme (Bombyx mori (Silk moth)).